Consider the following 115-residue polypeptide: 5-hydroxyisourate hydrolase (115 aa).

Positions 1–23 (MSGLTTHILDQASGKPAAGVGVR) are disordered. 3 residues coordinate substrate: His7, Arg45, and Tyr112.

This sequence belongs to the transthyretin family. 5-hydroxyisourate hydrolase subfamily. As to quaternary structure, homotetramer.

The catalysed reaction is 5-hydroxyisourate + H2O = 5-hydroxy-2-oxo-4-ureido-2,5-dihydro-1H-imidazole-5-carboxylate + H(+). In terms of biological role, catalyzes the hydrolysis of 5-hydroxyisourate (HIU) to 2-oxo-4-hydroxy-4-carboxy-5-ureidoimidazoline (OHCU). In Caulobacter vibrioides (strain ATCC 19089 / CIP 103742 / CB 15) (Caulobacter crescentus), this protein is 5-hydroxyisourate hydrolase.